The primary structure comprises 625 residues: MFDIQEELKKLPDKPGVYIMKDENGEIIYVGKAVVLKNRVRQYFQSLSNQTPKVRAMVAHIKEFEYIVTDTELEALILECNLIKKHRPKFNILLKDDKNYPYIKVTMNEDFPRILMTRRVEKDGAKYFGPYTSAYAVRETIDLVKKLFPVKTCSKVLPRDIGKGRPCLNYHIYQCLGPCQGNVSKEEYRFMMQDVCNFLGGRQEDIIKKLEKDMKEAADNLEFERAARIRDKINSLKHIAEKQKIISTAMEDQDVIAFAKSETDSCIQVFFIRGGKLIGREHFILEGTSDVSDSELMTAFVKQFYSSAAYVPGQIILQEDIDEMEIIEKWLSGKRGTKTYIKVPRRGEKLKLVEMVSKNALIELNQFKERIKKEAALAKEGMEKLKELLNLDRLPRRIEAYDISNTGSTEIVGSMVVFENGSPKKSDYRRFKIKSINVQNDYQSMQEVIFRRLKRAQKEMTEKDEGGGKDVGEKGAGFGTLPDVLLVDGGTGHVNAVRSVLEELDFNIPVYGMVKDDNHRTRGLVTGEREFDLSKDIVLLRFVTAIQDEAHRFALEYNRKLRAKRYSGSVLDNIEGVGPKRKKELIRHFGSVKAIKEAEPGEIAKVKGISRDLAQKIYDYFRQQE.

In terms of domain architecture, GIY-YIG spans 13–92; that stretch reads DKPGVYIMKD…IKKHRPKFNI (80 aa). One can recognise a UVR domain in the interval 204–239; the sequence is EDIIKKLEKDMKEAADNLEFERAARIRDKINSLKHI.

This sequence belongs to the UvrC family. As to quaternary structure, interacts with UvrB in an incision complex.

It localises to the cytoplasm. The UvrABC repair system catalyzes the recognition and processing of DNA lesions. UvrC both incises the 5' and 3' sides of the lesion. The N-terminal half is responsible for the 3' incision and the C-terminal half is responsible for the 5' incision. This Acetivibrio thermocellus (strain ATCC 27405 / DSM 1237 / JCM 9322 / NBRC 103400 / NCIMB 10682 / NRRL B-4536 / VPI 7372) (Clostridium thermocellum) protein is UvrABC system protein C.